An 87-amino-acid chain; its full sequence is U3-theraphotoxin-Hhn1g (87 aa).

A signal peptide spans 1–24 (MVNMKASMFLTFAGLVLLFVVCFA). The propeptide occupies 25 to 52 (SESEEKEFPKEMLSSIFAVDNDFKQEER). Disulfide bonds link Cys54–Cys67, Cys61–Cys72, and Cys66–Cys79.

It belongs to the neurotoxin 10 (Hwtx-1) family. 51 (Hntx-8) subfamily. Hntx-8 sub-subfamily. Expressed by the venom gland.

It localises to the secreted. Its function is as follows. Ion channel inhibitor. The polypeptide is U3-theraphotoxin-Hhn1g (Cyriopagopus hainanus (Chinese bird spider)).